Consider the following 2326-residue polypeptide: Probable voltage-dependent N-type calcium channel subunit alpha-1B (2326 aa).

Residues 1-83 lie on the Cytoplasmic side of the membrane; sequence MARLGNDVPA…DNIIRKYAKR (83 aa). The segment at 17–37 is disordered; it reads AGGGRGANRHAGPQAGQRGMY. An I repeat occupies 75-351; the sequence is NIIRKYAKRI…LVLGVLSGEF (277 aa). The helical transmembrane segment at 84–107 threads the bilayer; sequence ITEWPPFEYMILATIIANCIVLAL. Over 108-124 the chain is Extracellular; it reads EQHLPDGDKTPMSERLD. The chain crosses the membrane as a helical span at residues 125 to 145; that stretch reads DTEPYFIGIFCFEAGIKIIAL. The Cytoplasmic portion of the chain corresponds to 146–156; the sequence is GFAFHKGSYLR. The helical transmembrane segment at 157-175 threads the bilayer; sequence NGWNVMDFVVVLTGILTTI. Residues 176 to 180 are Extracellular-facing; it reads GTDFD. The chain crosses the membrane as a helical span at residues 181 to 204; that stretch reads LRTLRAVRVLRPLKLVSGIPSLQV. Topologically, residues 205-214 are cytoplasmic; the sequence is VLKSIMKAMV. A helical membrane pass occupies residues 215 to 237; it reads PLLQIGLLLFFAILMFAIIGLEF. At 238–323 the chain is on the extracellular side; the sequence is YMGKFHKTCF…TANDALGNTW (86 aa). N-linked (GlcNAc...) asparagine glycosylation occurs at Asn271. The helical transmembrane segment at 324–348 threads the bilayer; the sequence is NWLYFIPLIVIGSFFMLNLVLGVLS. At 349–472 the chain is on the cytoplasmic side; it reads GEFAKERERV…FFIRRMVKSQ (124 aa). The interval 371 to 388 is binding to the beta subunit; it reads QQVEQEFNRYLRWIHIAE. The stretch at 458–702 is one II repeat; that stretch reads EKRFRFFIRR…VFLAIAVDNL (245 aa). The chain crosses the membrane as a helical span at residues 473 to 491; the sequence is SFYWIVLCLVGLNTLCVAI. Topologically, residues 492–501 are extracellular; that stretch reads VHYDQPPLLT. A helical membrane pass occupies residues 502–524; the sequence is DALYFAEFVFLGLFLTEMSLKMY. Residues 525 to 534 are Cytoplasmic-facing; it reads GLGPRNYFHS. Ser534 serves as a coordination point for a 1,2-diacyl-sn-glycero-3-phospho-(1D-myo-inositol-4,5-bisphosphate). The chain crosses the membrane as a helical span at residues 535 to 556; the sequence is SFNCFDFGVIVGSIFEVVWTAV. At 557–563 the chain is on the extracellular side; sequence KPDTSFG. The helical transmembrane segment at 564–576 threads the bilayer; that stretch reads ISVLRALRLLRIF. Residues Arg574 and Lys577 each coordinate a 1,2-diacyl-sn-glycero-3-phospho-(1D-myo-inositol-4,5-bisphosphate). The Cytoplasmic portion of the chain corresponds to 577–594; it reads KVTKYWNSLRNLVVSLLN. The chain crosses the membrane as a helical span at residues 595-620; it reads SMKSIISLLFLLFLFIVVFALLGMQL. Over 621 to 672 the chain is Extracellular; that stretch reads FGGQFNFEDGTPPTNFDTFPAAILTVFQILTGEDWNEVMYYGIEAHGGVKKG. A helical transmembrane segment spans residues 673 to 699; the sequence is MFSSVYFIILTLFGNYTLLNVFLAIAV. The Cytoplasmic segment spans residues 700–1148; sequence DNLANAQELT…ACHYIVNLRY (449 aa). Residues 793-1048 are disordered; that stretch reads SHQIRPDMKT…LQHLPQQPED (256 aa). Composition is skewed to basic and acidic residues over residues 796–808, 854–879, 886–908, 935–979, and 994–1011; these read IRPD…DRPL, KLGE…DDKR, SKET…SHEG, HGTE…EGAE, and SEEK…VLRE. Residues 1020 to 1032 show a composition bias toward polar residues; it reads TQPSQDSGTQGNV. The III repeat unit spans residues 1134–1416; it reads NPVRRACHYI…IFVALIIITF (283 aa). Residues 1149–1167 form a helical membrane-spanning segment; it reads FEMCILLVITMSSIALAAE. Residues 1168–1175 are Extracellular-facing; that stretch reads DPVQGDAP. A helical transmembrane segment spans residues 1176 to 1200; that stretch reads RNNVLKYLDYVFTGVFTFEMVIKMI. The Cytoplasmic portion of the chain corresponds to 1201 to 1214; the sequence is NLGLILHPGSYFRD. The chain crosses the membrane as a helical span at residues 1215-1235; that stretch reads LWNILDFIVVSGALVAFAFTG. Topologically, residues 1236-1241 are extracellular; that stretch reads SRGKDL. The chain crosses the membrane as a helical span at residues 1242–1262; sequence NTIKSLRVLRVLRPLKTIKRL. The Cytoplasmic portion of the chain corresponds to 1263 to 1280; it reads PKLKAVFDCVVNSLKNVL. The chain crosses the membrane as a helical span at residues 1281-1300; sequence NILIVYMLFMFIFAVIAVQL. Over 1301-1387 the chain is Extracellular; that stretch reads FKGKFFYCTD…DQGPSPSYRM (87 aa). The chain crosses the membrane as a helical span at residues 1388–1413; that stretch reads EMSIFYVVYFVVFPFFFVNIFVALII. Residues 1414–1468 are Cytoplasmic-facing; it reads ITFQEQGDKVMSDCSLEKNERACIDFAISAKPLTRYMPQNKQTFQYKMWKFVVSP. Residues 1453 to 1708 form an IV repeat; it reads NKQTFQYKMW…LFVAVIMDNF (256 aa). The helical transmembrane segment at 1469–1487 threads the bilayer; that stretch reads PFEYLIMALIALNTIVLMM. Residues 1488 to 1495 are Extracellular-facing; that stretch reads KFYNAPDP. A helical transmembrane segment spans residues 1496 to 1520; sequence YDRMLQYLNILFTFLFSMECVLKLI. The Cytoplasmic portion of the chain corresponds to 1521 to 1530; the sequence is GFGVLNYFRD. Residues 1531–1552 form a helical membrane-spanning segment; it reads AWNVFDFVTVLGSITDILVTEL. At 1553-1558 the chain is on the extracellular side; sequence ADSFIN. A glycan (N-linked (GlcNAc...) asparagine) is linked at Asn1558. The chain crosses the membrane as a helical span at residues 1559-1577; the sequence is LSFLRLFRAARLIKLLRQG. Residues 1578 to 1596 lie on the Cytoplasmic side of the membrane; sequence YTIRILLWTFVQSFKALPY. A helical transmembrane segment spans residues 1597-1616; that stretch reads VCLLIAMLFFIYAIIGMQVF. Residues 1617-1680 lie on the Extracellular side of the membrane; the sequence is GNIELDDDGA…IDGDECGSNF (64 aa). The helical transmembrane segment at 1681–1704 threads the bilayer; sequence AYFYFVSFIFFSSFLMLNLFVAVI. The Cytoplasmic segment spans residues 1705-2326; it reads MDNFEYLTRD…YRETDEDDWC (622 aa). One can recognise an EF-hand domain in the interval 1721 to 1756; the sequence is HHLDEFIRVWAEYDPGARGRITYNDMYEMLRHMCPP. Residues Asp1734, Arg1740, and Asp1745 each contribute to the Ca(2+) site. Positions 1897–1912 are enriched in polar residues; it reads EEPSSYSTSHKNSVNP. 4 disordered regions span residues 1897-1916, 1932-1954, 2039-2242, and 2271-2326; these read EEPS…LYQG, CAEG…KSSS, PHHH…SSDP, and TTAT…DDWC. Residues 1932–1948 are compositionally biased toward basic and acidic residues; the sequence is CAEGKKEVPESHPEEAG. Over residues 2039-2055 the composition is skewed to basic residues; sequence PHHHHHHHRCHHRREKK. Basic and acidic residues-rich tracts occupy residues 2056–2069 and 2077–2104; these read QRSL…HADE and QLRD…EKQR. 3 stretches are compositionally biased toward polar residues: residues 2142–2161, 2275–2289, and 2302–2311; these read GSGS…STPS, GRSP…QPPQ, and GRSTGPSTAA.

The protein belongs to the calcium channel alpha-1 subunit (TC 1.A.1.11) family. In terms of assembly, multisubunit complex consisting of alpha-1, alpha-2, beta and delta subunits in a 1:1:1:1 ratio. The channel activity is directed by the pore-forming and voltage-sensitive alpha-1 subunit. In many cases, this subunit is sufficient to generate voltage-sensitive calcium channel activity. The auxiliary subunits beta and alpha-2/delta linked by a disulfide bridge regulate the channel activity. Phosphorylated in vitro by CaM-kinase II, PKA, PKC and CGPK. In terms of tissue distribution, expression is higher in the electric lobe than in the forebrain.

The protein localises to the membrane. In terms of biological role, the isoform alpha-1B gives rise to N-type calcium currents. N-type calcium channels belong to the 'high-voltage activated' (HVA) group. The protein is Probable voltage-dependent N-type calcium channel subunit alpha-1B of Diplobatis ommata (Ocellated electric ray).